Reading from the N-terminus, the 471-residue chain is Sestrin-2 (471 aa).

The residue at position 1 (M1) is an N-acetylmethionine. Residues 57–230 are N-terminal domain; mediates the alkylhydroperoxide reductase activity; it reads GLEALMSSGR…APSPPSEQST (174 aa). C116 serves as the catalytic Cysteine sulfenic acid (-SOH) intermediate. K166 participates in a covalent cross-link: Glycyl lysine isopeptide (Lys-Gly) (interchain with G-Cter in ubiquitin). Residues 212-241 form a disordered region; sequence DPEGSPAPQAPSPPSEQSTPPSRDSLNHSG. Position 240 is a phosphoserine (S240). The tract at residues 299–471 is C-terminal domain; mediates TORC1 regulation; the sequence is ANPDMLCFVE…ALRAITRYMT (173 aa). L-leucine contacts are provided by residues 365–368, T377, and E442; that span reads TYNT.

It belongs to the sestrin family. As to quaternary structure, interacts with the GATOR2 complex which is composed of MIOS, SEC13, SEH1L, WDR24 and WDR59; the interaction is negatively regulated by leucine. Conveys leucine availability via direct interaction with SEH1L and WDR24 components of the GATOR2 complex. Interacts with RRAGA, RRAGB, RRAGC and RRAGD; may function as a guanine nucleotide dissociation inhibitor for RRAGs and regulate them. May interact with the TORC2 complex. Interacts with KEAP1, RBX1, SQSTM and ULK1; to regulate the degradation of KEAP1. May also associate with the complex composed of TSC1, TSC2 and the AMP-responsive protein kinase/AMPK to regulate TORC1 signaling. May interact with PRDX1. Phosphorylated by ULK1 at multiple sites. Post-translationally, ubiquitinated at Lys-166 by RNF167 via 'Lys-63'-linked polyubiquitination in response to leucine deprivation: ubiquitination promotes SESN2-interaction with the GATOR2 complex, leading to inhibit the TORC1 signaling pathway. Deubiquitinated at Lys-166 by STAMBPL1, promoting the TORC1 signaling pathway. Ubiquitinated by RNF186; ubiquitination mediates proteasomal degradation.

It is found in the cytoplasm. The catalysed reaction is a hydroperoxide + L-cysteinyl-[protein] = S-hydroxy-L-cysteinyl-[protein] + an alcohol. Functionally, functions as an intracellular leucine sensor that negatively regulates the mTORC1 signaling pathway through the GATOR complex. In absence of leucine, binds the GATOR subcomplex GATOR2 and prevents mTORC1 signaling. Binding of leucine to SESN2 disrupts its interaction with GATOR2 thereby activating the TORC1 signaling pathway. This stress-inducible metabolic regulator also plays a role in protection against oxidative and genotoxic stresses. May negatively regulate protein translation in response to endoplasmic reticulum stress, via mTORC1. May positively regulate the transcription by NFE2L2 of genes involved in the response to oxidative stress by facilitating the SQSTM1-mediated autophagic degradation of KEAP1. May also mediate TP53 inhibition of TORC1 signaling upon genotoxic stress. Moreover, may prevent the accumulation of reactive oxygen species (ROS) through the alkylhydroperoxide reductase activity born by the N-terminal domain of the protein. Was originally reported to contribute to oxidative stress resistance by reducing PRDX1. However, this could not be confirmed. This is Sestrin-2 from Bos taurus (Bovine).